A 492-amino-acid chain; its full sequence is N-succinylglutamate 5-semialdehyde dehydrogenase (492 aa).

Residue 220–225 (GSANTG) participates in NAD(+) binding. Catalysis depends on residues glutamate 243 and cysteine 277.

It belongs to the aldehyde dehydrogenase family. AstD subfamily.

The enzyme catalyses N-succinyl-L-glutamate 5-semialdehyde + NAD(+) + H2O = N-succinyl-L-glutamate + NADH + 2 H(+). The protein operates within amino-acid degradation; L-arginine degradation via AST pathway; L-glutamate and succinate from L-arginine: step 4/5. Functionally, catalyzes the NAD-dependent reduction of succinylglutamate semialdehyde into succinylglutamate. The polypeptide is N-succinylglutamate 5-semialdehyde dehydrogenase (Escherichia coli O6:H1 (strain CFT073 / ATCC 700928 / UPEC)).